The chain runs to 267 residues: Acetyl-coenzyme A carboxylase carboxyl transferase subunit beta 1 (267 aa).

Residues threonine 9 to glycine 267 enclose the CoA carboxyltransferase N-terminal domain. The Zn(2+) site is built by cysteine 13, cysteine 16, cysteine 31, and cysteine 34. Residues cysteine 13–cysteine 34 form a C4-type zinc finger.

Belongs to the AccD/PCCB family. Acetyl-CoA carboxylase is a heterohexamer composed of biotin carboxyl carrier protein (AccB), biotin carboxylase (AccC) and two subunits each of ACCase subunit alpha (AccA) and ACCase subunit beta (AccD). It depends on Zn(2+) as a cofactor.

The protein resides in the cytoplasm. It catalyses the reaction N(6)-carboxybiotinyl-L-lysyl-[protein] + acetyl-CoA = N(6)-biotinyl-L-lysyl-[protein] + malonyl-CoA. Its pathway is lipid metabolism; malonyl-CoA biosynthesis; malonyl-CoA from acetyl-CoA: step 1/1. Component of the acetyl coenzyme A carboxylase (ACC) complex. Biotin carboxylase (BC) catalyzes the carboxylation of biotin on its carrier protein (BCCP) and then the CO(2) group is transferred by the transcarboxylase to acetyl-CoA to form malonyl-CoA. The chain is Acetyl-coenzyme A carboxylase carboxyl transferase subunit beta 1 from Lactiplantibacillus plantarum (strain JDM1) (Lactobacillus plantarum).